The following is a 223-amino-acid chain: Acetate CoA-transferase subunit beta (223 aa).

The active site involves Glu-46.

Belongs to the 3-oxoacid CoA-transferase subunit B family. Heterotetramer composed of two alpha subunits (AtoD) and two beta subunits (AtoA).

The catalysed reaction is an acyl-CoA + acetate = a carboxylate + acetyl-CoA. It catalyses the reaction acetoacetate + acetyl-CoA = acetoacetyl-CoA + acetate. Its pathway is lipid metabolism; short-chain fatty acid metabolism. In terms of biological role, coenzyme A transferase which is involved in short-chain fatty acid degradation and catalyzes the activation of short-chain fatty acids to their respective CoA thiolesters. This chain is Acetate CoA-transferase subunit beta (atoA), found in Haemophilus influenzae (strain ATCC 51907 / DSM 11121 / KW20 / Rd).